Consider the following 297-residue polypeptide: MRALRAGLTLASGAGLGAVVEGWRRRREDARAAPGLLGRLPVLPVAAAAELPPVPGGPRGPGELAKYGLPGLAQLKSRESYVLCYDPRTRGALWVVEQLRPERLRGDGDRRECDFREDDSVHAYHRATNADYRGSGFDRGHLAAAANHRWSQKAMDDTFYLSNVAPQVPHLNQNAWNNLEKYSRSLTRSYQNVYVCTGPLFLPRTEADGKSYVKYQVIGKNHVAVPTHFFKVLILEAAGGQIELRTYVMPNAPVDEAIPLERFLVPIESIERASGLLFVPNILARAGSLKAITAGSK.

The transit peptide at 1–48 (MRALRAGLTLASGAGLGAVVEGWRRRREDARAAPGLLGRLPVLPVAAA) directs the protein to the mitochondrion. Thr-128 carries the phosphothreonine; by GSK3-beta modification. The active-site Proton acceptor is the His-141. Asn-172 provides a ligand contact to Mg(2+). The interval 286–296 (AGSLKAITAGS) is essential for deoxyribonuclease activity. At Ser-288 the chain carries Phosphoserine; by GSK3-beta.

This sequence belongs to the DNA/RNA non-specific endonuclease family. In terms of assembly, homodimer; disulfide-linked. Homodimerization is essential for enzyme activity. Interacts with YWHAG. Mg(2+) serves as cofactor. Post-translationally, GSK3-beta-mediated dual phosphorylations at Thr-128 and Ser-288 is necessary for its interaction with YWHAG and the induction of autophagy.

The protein localises to the mitochondrion. Its function is as follows. Endonuclease that preferentially catalyzes the cleavage of double-stranded 5-hydroxymethylcytosine (5hmC)-modified DNA. The 5hmC-modified nucleotide does not increase the binding affinity, but instead increases the efficiency of cutting and specifies the site of cleavage for the modified DNAs. Shows significantly higher affinity for four-stranded Holliday junction over duplex and single-stranded DNAs. Promotes conservative recombination when the DNA is 5hmC-modified. Promotes autophagy through the suppression of mTOR by its phosphorylation-mediated interaction with YWHAG and its endonuclease activity-mediated DNA damage response. GSK3-beta mediated phosphorylation of ENDOG enhances its interaction with YWHAG, leading to the release of TSC2 and PIK3C3 from YWHAG resulting in mTOR pathway suppression and autophagy initiation. Promotes cleavage of mtDNA in response to oxidative and nitrosative stress, in turn inducing compensatory mtDNA replication. The chain is Endonuclease G, mitochondrial (ENDOG) from Homo sapiens (Human).